We begin with the raw amino-acid sequence, 557 residues long: Multidrug transporter FLR1 (557 aa).

N33, N48, and N106 each carry an N-linked (GlcNAc...) asparagine glycan. Residues 44-57 (SESSNMSFNSGSEE) are compositionally biased toward low complexity. A disordered region spans residues 44 to 67 (SESSNMSFNSGSEENSQEKSVEDL). 8 helical membrane-spanning segments follow: residues 113–133 (ALIIIQTMLLTCVNYMGSSIY), 149–169 (VVGTLNLSLYVLGYGLGPIVF), 181–201 (LPVYMITFFLFTMLQIGCALA), 204–224 (FAGLVILRFITGVLCSPALST), 238–258 (LALVLGLWSIGAVAAPVLAPL), 271–291 (WIFWLLFFCCCATMLLLTFFF), 355–375 (LYIALCYGAFYLFFEAFPIVF), and 387–407 (GLAYFGFCVGCIFAYIILLVF). N418 carries N-linked (GlcNAc...) asparagine glycosylation. Transmembrane regions (helical) follow at residues 426-446 (TLILAMCIGWCIPLALFMFGW), 450-470 (VHWILPIISEVFFVLGCFNIF), 484-506 (YVASVFAGNGFARSSFAAAFPLF), and 521-541 (VAWGSSLVGFFTIGLWVIPFV).

Belongs to the major facilitator superfamily.

The protein resides in the cell membrane. In terms of biological role, multidrug transporter that confers resistance to 5-flucytosine (5-FC) and clotrimazole. Also confers resistance to benomyl, but not 4-nitroquinoline-N-oxide, cycloheximide, or fluconazole. Plays direct roles in extrusion of 5-flucytosine and clotrimazole. The chain is Multidrug transporter FLR1 from Candida glabrata (strain ATCC 2001 / BCRC 20586 / JCM 3761 / NBRC 0622 / NRRL Y-65 / CBS 138) (Yeast).